Here is a 129-residue protein sequence, read N- to C-terminus: Large ribosomal subunit protein bL12 (129 aa).

The protein belongs to the bacterial ribosomal protein bL12 family. As to quaternary structure, homodimer. Part of the ribosomal stalk of the 50S ribosomal subunit. Forms a multimeric L10(L12)X complex, where L10 forms an elongated spine to which 2 to 4 L12 dimers bind in a sequential fashion. Binds GTP-bound translation factors.

Forms part of the ribosomal stalk which helps the ribosome interact with GTP-bound translation factors. Is thus essential for accurate translation. The chain is Large ribosomal subunit protein bL12 from Fervidobacterium nodosum (strain ATCC 35602 / DSM 5306 / Rt17-B1).